Consider the following 219-residue polypeptide: Elongation factor Ts (219 aa).

The interval 82–85 (TDFV) is involved in Mg(2+) ion dislocation from EF-Tu.

This sequence belongs to the EF-Ts family.

The protein localises to the cytoplasm. Functionally, associates with the EF-Tu.GDP complex and induces the exchange of GDP to GTP. It remains bound to the aminoacyl-tRNA.EF-Tu.GTP complex up to the GTP hydrolysis stage on the ribosome. The sequence is that of Elongation factor Ts from Gloeobacter violaceus (strain ATCC 29082 / PCC 7421).